The primary structure comprises 381 residues: Spermidine/putrescine import ATP-binding protein PotA (381 aa).

The 231-residue stretch at 22-252 folds into the ABC transporter domain; sequence VELRNVFKFF…PKTSFVADFI (231 aa). 54 to 61 lines the ATP pocket; the sequence is GPSGCGKT.

This sequence belongs to the ABC transporter superfamily. Spermidine/putrescine importer (TC 3.A.1.11.1) family. The complex is composed of two ATP-binding proteins (PotA), two transmembrane proteins (PotB and PotC) and a solute-binding protein (PotD).

It is found in the cell inner membrane. It carries out the reaction ATP + H2O + polyamine-[polyamine-binding protein]Side 1 = ADP + phosphate + polyamineSide 2 + [polyamine-binding protein]Side 1.. Part of the ABC transporter complex PotABCD involved in spermidine/putrescine import. Responsible for energy coupling to the transport system. This is Spermidine/putrescine import ATP-binding protein PotA from Trichormus variabilis (strain ATCC 29413 / PCC 7937) (Anabaena variabilis).